Here is a 1010-residue protein sequence, read N- to C-terminus: Protein translocase subunit SecA (1010 aa).

Residues glutamine 86, 104-108 (GEGKT), and aspartate 535 contribute to the ATP site. The span at 893–904 (QAGAADGNAKGA) shows a compositional bias: low complexity. A disordered region spans residues 893–916 (QAGAADGNAKGARTVRHSVRLPGR). Zn(2+) is bound by residues cysteine 920, cysteine 922, cysteine 931, and histidine 932. A compositionally biased stretch (low complexity) spans 950-981 (QHAAVAADTPAQPAPQATATRPPTSQVPRGRA). Residues 950–1010 (QHAAVAADTP…RGKGASARKK (61 aa)) form a disordered region.

The protein belongs to the SecA family. As to quaternary structure, monomer and homodimer. Part of the essential Sec protein translocation apparatus which comprises SecA, SecYEG and auxiliary proteins SecDF. Other proteins may also be involved. Requires Zn(2+) as cofactor.

It localises to the cell membrane. Its subcellular location is the cytoplasm. It carries out the reaction ATP + H2O + cellular proteinSide 1 = ADP + phosphate + cellular proteinSide 2.. Its function is as follows. Part of the Sec protein translocase complex. Interacts with the SecYEG preprotein conducting channel. Has a central role in coupling the hydrolysis of ATP to the transfer of proteins into and across the cell membrane, serving as an ATP-driven molecular motor driving the stepwise translocation of polypeptide chains across the membrane. The chain is Protein translocase subunit SecA from Roseiflexus sp. (strain RS-1).